The following is a 318-amino-acid chain: Homeobox protein Nkx-2.5 (318 aa).

Positions 137–196 (RRKPRVLFSQAQVYELERRFKQQRYLSAPERDQLASVLKLTSTQVKIWFQNRRYKCKRQR) form a DNA-binding region, homeobox.

The protein belongs to the NK-2 homeobox family. Homodimer (via the homeobox); binds DNA as homodimer. Interacts (via the homeobox) with TBX5 (via the T-box); this complex binds DNA. Interacts with HIPK1 and HIPK2, but not HIPK3. Interacts with the C-terminal zinc finger of GATA4 through its homeobox domain. Also interacts with JARID2 which represses its ability to activate transcription of ANF. Interacts with FBLIM1. Interacts with TBX18. Interacts with histone methyltransferase NSD2 (via HMG box). Interacts with NEDD9. Interacts with TBX1. Predominantly in the adult and embryonic heart, and to a lesser extent in lingual muscle, spleen and stomach.

It is found in the nucleus. Transcription factor required for the development of the heart and the spleen. During heart development, acts as a transcriptional activator of NPPA/ANF in cooperation with GATA4. May cooperate with TBX2 to negatively modulate expression of NPPA/ANF in the atrioventricular canal. Binds to the core DNA motif of NPPA promoter. Together with PBX1, required for spleen development through a mechanism that involves CDKN2B repression. Positively regulates transcription of genes such as COL3A1 and MMP2, resulting in increased pulmonary endothelial fibrosis in response to hypoxia. The protein is Homeobox protein Nkx-2.5 (Nkx2-5) of Mus musculus (Mouse).